A 638-amino-acid polypeptide reads, in one-letter code: 1-deoxy-D-xylulose-5-phosphate synthase (638 aa).

Residues His-74 and 115–117 (GHS) each bind thiamine diphosphate. Asp-146 lines the Mg(2+) pocket. Thiamine diphosphate-binding positions include 147 to 148 (GA), Asn-175, Tyr-286, and Glu-366. Asn-175 lines the Mg(2+) pocket.

It belongs to the transketolase family. DXPS subfamily. Homodimer. Mg(2+) serves as cofactor. The cofactor is thiamine diphosphate.

It carries out the reaction D-glyceraldehyde 3-phosphate + pyruvate + H(+) = 1-deoxy-D-xylulose 5-phosphate + CO2. It participates in metabolic intermediate biosynthesis; 1-deoxy-D-xylulose 5-phosphate biosynthesis; 1-deoxy-D-xylulose 5-phosphate from D-glyceraldehyde 3-phosphate and pyruvate: step 1/1. In terms of biological role, catalyzes the acyloin condensation reaction between C atoms 2 and 3 of pyruvate and glyceraldehyde 3-phosphate to yield 1-deoxy-D-xylulose-5-phosphate (DXP). The chain is 1-deoxy-D-xylulose-5-phosphate synthase from Syntrophomonas wolfei subsp. wolfei (strain DSM 2245B / Goettingen).